Consider the following 172-residue polypeptide: Propanediol dehydratase small subunit (172 aa).

The protein belongs to the diol/glycerol dehydratase small subunit family. As to quaternary structure, the propanediol dehydratase enzyme is a heterotrimeric complex composed of a large (PduC), a medium (PduD) and a small (PduE) subunit. Adenosylcob(III)alamin is required as a cofactor.

It is found in the bacterial microcompartment. The enzyme catalyses propane-1,2-diol = propanal + H2O. It participates in polyol metabolism; 1,2-propanediol degradation. In terms of biological role, part of the PduCDE complex that catalyzes the dehydration of 1,2-propanediol (1,2-PD) to propionaldehyde. Localized in the bacterial microcompartment (BMC) dedicated to 1,2-PD degradation. Functionally, expression of a cosmid containing the full 21-gene pdu operon in E.coli allows E.coli to grow on 1,2-propanediol (1,2-PD) with the appearance of BMCs in its cytoplasm. Its function is as follows. The 1,2-PD-specific bacterial microcompartment (BMC) concentrates low levels of 1,2-PD catabolic enzymes, concentrates volatile reaction intermediates thus enhancing pathway flux and keeps the level of toxic, mutagenic propionaldehyde low. This is Propanediol dehydratase small subunit from Citrobacter freundii.